A 74-amino-acid polypeptide reads, in one-letter code: MAKKPTQNFETTLQELESIVNHLEAGDLPLEQALTEFETAIKLVQQGQQRLQQAEQRIQILLNKDEQAELADYE.

It belongs to the XseB family. In terms of assembly, heterooligomer composed of large and small subunits.

It is found in the cytoplasm. The enzyme catalyses Exonucleolytic cleavage in either 5'- to 3'- or 3'- to 5'-direction to yield nucleoside 5'-phosphates.. Its function is as follows. Bidirectionally degrades single-stranded DNA into large acid-insoluble oligonucleotides, which are then degraded further into small acid-soluble oligonucleotides. The polypeptide is Exodeoxyribonuclease 7 small subunit (Haemophilus ducreyi (strain 35000HP / ATCC 700724)).